The following is a 234-amino-acid chain: Sugar fermentation stimulation protein homolog (234 aa).

Belongs to the SfsA family.

The polypeptide is Sugar fermentation stimulation protein homolog (Pectobacterium atrosepticum (strain SCRI 1043 / ATCC BAA-672) (Erwinia carotovora subsp. atroseptica)).